The primary structure comprises 62 residues: MAKKVKGNRVQVILECTEHKESGMPGISRYITTKNRKNTTQRLELKKYNPILRRMTLHKEIK.

It belongs to the bacterial ribosomal protein bL33 family.

The protein is Large ribosomal subunit protein bL33 of Porphyromonas gingivalis (strain ATCC 33277 / DSM 20709 / CIP 103683 / JCM 12257 / NCTC 11834 / 2561).